A 119-amino-acid polypeptide reads, in one-letter code: V-type proton ATPase subunit F (119 aa).

This sequence belongs to the V-ATPase F subunit family. In terms of assembly, V-ATPase is a heteromultimeric enzyme made up of two complexes: the ATP-hydrolytic V1 complex and the proton translocation V0 complex. The V1 complex consists of three catalytic AB heterodimers that form a heterohexamer, three peripheral stalks each consisting of EG heterodimers, one central rotor including subunits D and F, and the regulatory subunits C and H. The proton translocation complex V0 consists of the proton transport subunit a, a ring of proteolipid subunits c9c'', rotary subunit d, subunits e and f, and the accessory subunits ATP6AP1/Ac45 and ATP6AP2/PRR. In terms of tissue distribution, expressed in brain (at protein level).

Its subcellular location is the cytoplasmic vesicle. The protein localises to the secretory vesicle. It localises to the synaptic vesicle membrane. It is found in the clathrin-coated vesicle membrane. Subunit of the V1 complex of vacuolar(H+)-ATPase (V-ATPase), a multisubunit enzyme composed of a peripheral complex (V1) that hydrolyzes ATP and a membrane integral complex (V0) that translocates protons. V-ATPase is responsible for acidifying and maintaining the pH of intracellular compartments and in some cell types, is targeted to the plasma membrane, where it is responsible for acidifying the extracellular environment. In Bos taurus (Bovine), this protein is V-type proton ATPase subunit F (ATP6V1F).